The sequence spans 1132 residues: Protein CROWDED NUCLEI 1 (1132 aa).

The tract at residues 1 to 31 (MSTPLKVWQRWSTPTKATNPDSNGSSHGTGL) is disordered. Residues 10 to 28 (RWSTPTKATNPDSNGSSHG) are compositionally biased toward polar residues. Positions 73–714 (LLIEKKEWSS…KKLKEQREQF (642 aa)) form a coiled coil. Short sequence motifs (nuclear localization signal) lie at residues 379-386 (EKREAEWK) and 693-700 (IRKDVDDL). S774 and S803 each carry phosphoserine. Basic and acidic residues predominate over residues 849–859 (AESETGTKEVE). Disordered regions lie at residues 849 to 871 (AESE…DQSD), 883 to 909 (SLSN…TRSV), 924 to 1039 (INLY…VQQE), and 1061 to 1132 (GVST…FLTT). Residues 861–871 (TNVNSDGDQSD) are compositionally biased toward polar residues. 2 positions are modified to phosphoserine: S865 and S883. Over residues 895–907 (MKGKGKARTRRTR) the composition is skewed to basic residues. S908 is subject to Phosphoserine. Phosphoserine is present on residues S1093, S1105, and S1112. Positions 1095-1105 (DVNKTPLRADS) are enriched in basic and acidic residues.

Belongs to the CRWN family. In terms of assembly, core component of the LINC complex which is composed of inner nuclear membrane SUN domain-containing proteins coupled to outer nuclear membrane WIP and WIT proteins. The LINC complex also involves nucleoskeletal proteins CRWN/LINC and possibly KAKU4 and the cytoskeletal myosin KAKU1. Interacts with SUN1 and SUN2. Binds to KAKU4. As to expression, expressed at low levels in roots, leaves, flowers and flower stalks.

The protein localises to the nucleus membrane. The protein resides in the nucleus. It is found in the nucleoplasm. Its subcellular location is the nucleus lamina. Functionally, component of SUN-protein-containing multivariate complexes also called LINC complexes which link the nucleoskeleton and cytoskeleton by providing versatile outer nuclear membrane attachment sites for cytoskeletal filaments. Required for nucleus structure organization (e.g. size and shape). This is Protein CROWDED NUCLEI 1 from Arabidopsis thaliana (Mouse-ear cress).